Reading from the N-terminus, the 179-residue chain is Large ribosomal subunit protein uL5 (179 aa).

This sequence belongs to the universal ribosomal protein uL5 family. As to quaternary structure, part of the 50S ribosomal subunit; part of the 5S rRNA/L5/L18/L25 subcomplex. Contacts the 5S rRNA and the P site tRNA. Forms a bridge to the 30S subunit in the 70S ribosome.

This is one of the proteins that bind and probably mediate the attachment of the 5S RNA into the large ribosomal subunit, where it forms part of the central protuberance. In the 70S ribosome it contacts protein S13 of the 30S subunit (bridge B1b), connecting the 2 subunits; this bridge is implicated in subunit movement. Contacts the P site tRNA; the 5S rRNA and some of its associated proteins might help stabilize positioning of ribosome-bound tRNAs. This Yersinia pestis protein is Large ribosomal subunit protein uL5.